A 42-amino-acid chain; its full sequence is Photosystem I reaction center subunit IX (42 aa).

Residues 7–27 form a helical membrane-spanning segment; the sequence is YLSVAPVLSTLWFGILAGLLI.

This sequence belongs to the PsaJ family.

It is found in the plastid. The protein localises to the chloroplast thylakoid membrane. May help in the organization of the PsaE and PsaF subunits. The polypeptide is Photosystem I reaction center subunit IX (Lemna minor (Common duckweed)).